Reading from the N-terminus, the 197-residue chain is MTKGRKIIKVVIIGEKSVGKTSILRRYVDKRFVTLKPTIGVDFVMVSENMVTLQLWDTSGQERFRSLEISYYRGADYCILVFDVTNEKTLYDLKLWRDDFIEKTEIRDPILFPFIILGNKIDDPNRVVTEKAAIQWCKDNIGGNLTYFDTSAKDNINIEQVFKHISNQCENQPQSNEIPPEQLISLTEKKSNQSSCC.

GTP contacts are provided by residues 14-21 (GEKSVGKT), 33-38 (VTLKPT), 57-61 (DTSGQ), 119-122 (NKID), and 152-153 (AK). The Effector region signature appears at 31-39 (RFVTLKPTI). S-geranylgeranyl cysteine attachment occurs at residues Cys196 and Cys197.

It belongs to the small GTPase superfamily. Rab family.

In terms of biological role, protein transport. Probably involved in vesicular traffic. The sequence is that of Ras-related protein Rab-7B (rab7B) from Dictyostelium discoideum (Social amoeba).